The sequence spans 320 residues: Cytochrome f (320 aa).

The signal sequence occupies residues 1 to 36 (MKLNSLINLIQKSIYSCTLLLTILNIICIAPNSSNA). Residues F37, C57, C60, and H61 each coordinate heme. A helical transmembrane segment spans residues 286-305 (IKGMIAFFFVSVLAQIFFVL).

The protein belongs to the cytochrome f family. In terms of assembly, the 4 large subunits of the cytochrome b6-f complex are cytochrome b6, subunit IV (17 kDa polypeptide, petD), cytochrome f and the Rieske protein, while the 4 small subunits are PetG, PetL, PetM and PetN. The complex functions as a dimer. Heme serves as cofactor.

It is found in the plastid. It localises to the chloroplast thylakoid membrane. In terms of biological role, component of the cytochrome b6-f complex, which mediates electron transfer between photosystem II (PSII) and photosystem I (PSI), cyclic electron flow around PSI, and state transitions. This chain is Cytochrome f (petA), found in Porphyra purpurea (Red seaweed).